The primary structure comprises 1134 residues: Early transcription factor large subunit homolog (1134 aa).

The 301-residue stretch at 52–352 folds into the Helicase ATP-binding domain; the sequence is KGGRAFFPCD…PNGQPLQRQQ (301 aa). Position 99 to 106 (99 to 106) interacts with ATP; the sequence is WQTGTGKS. The DEAH box signature appears at 281 to 284; sequence DEIH. The Helicase C-terminal domain maps to 524-725; it reads MMKDILSIIR…EGDKALRKHA (202 aa).

This sequence belongs to the DEAD box helicase family. DEAH subfamily.

It localises to the virion. It carries out the reaction ATP + H2O = ADP + phosphate + H(+). Putative initation factor. The protein is Early transcription factor large subunit homolog of African swine fever virus (isolate Pig/Kenya/KEN-50/1950) (ASFV).